Reading from the N-terminus, the 415-residue chain is Polyketide biosynthesis malonyl-ACP decarboxylase PksF (415 aa).

One can recognise a Ketosynthase family 3 (KS3) domain in the interval 6-407 (LPEVVVTGVG…GMNTAVCIQN (402 aa)).

This sequence belongs to the thiolase-like superfamily. Beta-ketoacyl-ACP synthases family.

Its subcellular location is the cytoplasm. The catalysed reaction is malonyl-[ACP] + H(+) = acetyl-[ACP] + CO2. Its pathway is antibiotic biosynthesis; bacillaene biosynthesis. Its function is as follows. Involved in some intermediate steps for the synthesis of the antibiotic polyketide bacillaene which is involved in secondary metabolism. It decarboxylates selectively the malonyl group attached on the acyl-carrier-protein AcpK (Mal-AcpK). The chain is Polyketide biosynthesis malonyl-ACP decarboxylase PksF (pksF) from Bacillus subtilis (strain 168).